We begin with the raw amino-acid sequence, 1958 residues long: Rho GTPase-activating protein 21 (1958 aa).

Residues 1-42 form a disordered region; that stretch reads MMATRRTGLSEGDGDKLKACEVSKNKDGKEQSETVSLSEDET. Basic and acidic residues predominate over residues 13–32; that stretch reads DGDKLKACEVSKNKDGKEQS. Residues Ser-36 and Ser-57 each carry the phosphoserine modification. A PDZ domain is found at 50–159; sequence TVTLKRTSQG…TLELSVMPKD (110 aa). Polar residues-rich tracts occupy residues 286 to 295, 306 to 325, and 418 to 436; these read SNRNNHTGPS, SEQT…LSIP, and ASQS…TTLQ. Disordered stretches follow at residues 286-325 and 418-458; these read SNRN…LSIP and ASQS…QRSV. Low complexity predominate over residues 448-458; that stretch reads PQSVQIRQRSV. Position 459 is a phosphoserine (Ser-459). Omega-N-methylarginine occurs at positions 554 and 575. Ser-612, Ser-616, and Ser-625 each carry phosphoserine. A compositionally biased stretch (polar residues) spans 659-687; sequence SLLNQQTWVRTDSAPDQQVETGKSPSLSG. Residues 659-751 are disordered; the sequence is SLLNQQTWVR…PSGRQTPQPL (93 aa). The residue at position 717 (Ser-717) is a Phosphoserine. The span at 729 to 742 shows a compositional bias: basic and acidic residues; the sequence is LDNKEAVILREKPP. A Phosphothreonine modification is found at Thr-747. 3 positions are modified to phosphoserine: Ser-857, Ser-862, and Ser-881. The tract at residues 859-885 is disordered; it reads DHESVGPPSLDAQPNSKTERSKSYDEG. The segment covering 875–885 has biased composition (basic and acidic residues); it reads KTERSKSYDEG. The residue at position 882 (Tyr-882) is a Phosphotyrosine. Phosphoserine occurs at positions 924, 926, 954, 1099, and 1115. Positions 930 to 1097 are interaction with ARF1 and ARF6; the sequence is SDAAKEGWLH…AKSEPKTQSP (168 aa). In terms of domain architecture, PH spans 931 to 1040; the sequence is DAAKEGWLHF…WIKTIQESSN (110 aa). The interval 1086-1133 is disordered; it reads LGAKSEPKTQSPHSPKEESERKLLSKDDTSPPKDKGTWRKGIPSIMRK. Basic and acidic residues predominate over residues 1099–1122; sequence SPKEESERKLLSKDDTSPPKDKGT. One can recognise a Rho-GAP domain in the interval 1147–1339; it reads VRLDDCPPAH…TLIQHHDWFF (193 aa). Disordered stretches follow at residues 1348-1401, 1418-1575, 1598-1642, and 1655-1686; these read LTTV…GSGK, SRKR…KHSE, SLDS…SEFP, and RGKL…SSLD. The segment covering 1349–1362 has biased composition (polar residues); it reads TTVQEESTVDSQPV. Residues 1383-1401 are compositionally biased toward low complexity; sequence SDSATSDSTKSKGSWGSGK. 3 positions are modified to phosphoserine: Ser-1418, Ser-1432, and Ser-1433. 2 stretches are compositionally biased toward basic and acidic residues: residues 1441–1466 and 1477–1493; these read FFKK…ETLG and NSTR…KISL. Lys-1444 participates in a covalent cross-link: Glycyl lysine isopeptide (Lys-Gly) (interchain with G-Cter in SUMO). Ser-1504 bears the Phosphoserine mark. Thr-1516 is subject to Phosphothreonine. Phosphoserine is present on Ser-1527. The span at 1544 to 1559 shows a compositional bias: low complexity; it reads SDSGTLLSTSSQASLA. The interaction with CTNNA1 stretch occupies residues 1592 to 1861; it reads SATYLTSLDS…WLARERLRTS (270 aa). Polar residues predominate over residues 1603–1612; it reads RLSPEVQSVA. The segment covering 1624 to 1634 has biased composition (basic and acidic residues); sequence SELISEGRPVE. At Ser-1669 the chain carries Phosphoserine. Over residues 1671 to 1686 the composition is skewed to polar residues; sequence GSELSCTEGSLTSSLD. Thr-1682 bears the Phosphothreonine mark. Ser-1742 is modified (phosphoserine). A disordered region spans residues 1860–1958; that stretch reads TSTSDLSRGE…GSKAEFHPCL (99 aa). Positions 1874–1909 are enriched in polar residues; the sequence is QTENPSTREIATTDTPLSLHCNTGSSSSTLASTNRP. Ser-1917 is modified (phosphoserine). The span at 1918–1931 shows a compositional bias: polar residues; the sequence is PDQINGESFQNVSK.

As to quaternary structure, interacts with GTP-bound ARF1 and ARF6. Interacts with CTNNA1. Sumoylated with SUMO2 and SUMO3 in proliferating lymphocytes. In terms of tissue distribution, widely expressed with higher expression in brain, heart, skeletal muscle and placenta.

It localises to the golgi apparatus membrane. The protein localises to the cell junction. Its subcellular location is the cytoplasmic vesicle membrane. The protein resides in the cytoplasm. It is found in the cytoskeleton. Functions as a GTPase-activating protein (GAP) for RHOA and CDC42. Downstream partner of ARF1 which may control Golgi apparatus structure and function. Also required for CTNNA1 recruitment to adherens junctions. This is Rho GTPase-activating protein 21 (ARHGAP21) from Homo sapiens (Human).